The sequence spans 1026 residues: Retinoblastoma-related protein 1 (1026 aa).

The domain A stretch occupies residues 416–616 (TPVSTAMTTA…EKGSSMYNSL (201 aa)). Positions 416–872 (TPVSTAMTTA…NEVFIPSVKP (457 aa)) are pocket. The segment at 617-737 (AVARPALSVE…PGGGGETCAE (121 aa)) is spacer. The disordered stretch occupies residues 656-680 (PVPSLPKPEPMSAQNGDPRSPKRPC). The interval 738–872 (TGISVFFSKI…NEVFIPSVKP (135 aa)) is domain B. The disordered stretch occupies residues 1007–1026 (QNGSSASSSGAPLKSEQPDS).

The protein belongs to the retinoblastoma protein (RB) family.

The protein localises to the nucleus. Functionally, regulator of biological processes that recruits a histone deacetylase to control gene transcription. May play a role in the entry into mitosis, negatively regulating the cell proliferation. Formation of stable complexes with geminiviridae replication-associated proteins may create a cellular environment which favors viral DNA replication. This Pisum sativum (Garden pea) protein is Retinoblastoma-related protein 1 (RBR1).